A 420-amino-acid polypeptide reads, in one-letter code: MIOREX complex component 9 (420 aa).

2 helical membrane passes run 125 to 145 and 149 to 169; these read VYKV…TFIL and IVVI…FFFF.

In terms of assembly, associates with the mitochondrial ribosome.

The protein localises to the mitochondrion. The protein resides in the mitochondrion membrane. Component of MIOREX complexes, large expressome-like assemblies of ribosomes with factors involved in all the steps of post-transcriptional gene expression. This Saccharomyces cerevisiae (strain ATCC 204508 / S288c) (Baker's yeast) protein is MIOREX complex component 9.